A 1090-amino-acid chain; its full sequence is Aminopeptidase-like protein AC3.5 (1090 aa).

Topologically, residues 1-77 are cytoplasmic; sequence MEDVDLGKDR…KPKKRIACSP (77 aa). Low complexity predominate over residues 21–33; that stretch reads GNGSASNLNNRNN. The segment at 21–71 is disordered; that stretch reads GNGSASNLNNRNNIPLSEKAAKEPLQTQPQEAPPAPKPKVQKQKPPVKPKK. Over residues 59–71 the composition is skewed to basic residues; sequence KVQKQKPPVKPKK. The helical; Signal-anchor for type II membrane protein transmembrane segment at 78-98 threads the bilayer; that stretch reads GSAICLFLLAVAAIIFAAFLG. Residues 99-1090 are Lumenal-facing; that stretch reads HYLTKQNYEM…DEMESSEEQE (992 aa). 5 N-linked (GlcNAc...) asparagine glycosylation sites follow: asparagine 115, asparagine 123, asparagine 143, asparagine 176, and asparagine 230. The segment at 217 to 259 is disordered; it reads VTKRAKKSVDSGTNSTSEMPEGSGEEAMATTATTTTTESTTPV. A compositionally biased stretch (low complexity) spans 241–257; sequence EEAMATTATTTTTESTT. Residues asparagine 402, asparagine 710, asparagine 723, asparagine 789, asparagine 894, asparagine 919, asparagine 964, and asparagine 993 are each glycosylated (N-linked (GlcNAc...) asparagine). Basic and acidic residues predominate over residues 1069 to 1080; that stretch reads YLDGKMKGPAKD. Residues 1069–1090 are disordered; sequence YLDGKMKGPAKDDEMESSEEQE. Positions 1081 to 1090 are enriched in acidic residues; sequence DEMESSEEQE.

It belongs to the peptidase M1 family.

Its subcellular location is the membrane. The polypeptide is Aminopeptidase-like protein AC3.5 (Caenorhabditis elegans).